A 424-amino-acid polypeptide reads, in one-letter code: UDP-N-acetylglucosamine 1-carboxyvinyltransferase (424 aa).

Residue 22-23 (KN) coordinates phosphoenolpyruvate. Residue arginine 98 coordinates UDP-N-acetyl-alpha-D-glucosamine. The active-site Proton donor is the cysteine 122. Cysteine 122 carries the post-translational modification 2-(S-cysteinyl)pyruvic acid O-phosphothioketal. UDP-N-acetyl-alpha-D-glucosamine is bound by residues 127–131 (RPVDQ), aspartate 312, and isoleucine 334.

This sequence belongs to the EPSP synthase family. MurA subfamily.

The protein resides in the cytoplasm. It carries out the reaction phosphoenolpyruvate + UDP-N-acetyl-alpha-D-glucosamine = UDP-N-acetyl-3-O-(1-carboxyvinyl)-alpha-D-glucosamine + phosphate. The protein operates within cell wall biogenesis; peptidoglycan biosynthesis. In terms of biological role, cell wall formation. Adds enolpyruvyl to UDP-N-acetylglucosamine. In Xanthomonas campestris pv. campestris (strain 8004), this protein is UDP-N-acetylglucosamine 1-carboxyvinyltransferase.